The primary structure comprises 495 residues: Lysine--tRNA ligase (495 aa).

Mg(2+)-binding residues include E406 and E413.

This sequence belongs to the class-II aminoacyl-tRNA synthetase family. Homodimer. It depends on Mg(2+) as a cofactor.

It is found in the cytoplasm. It carries out the reaction tRNA(Lys) + L-lysine + ATP = L-lysyl-tRNA(Lys) + AMP + diphosphate. This Staphylococcus saprophyticus subsp. saprophyticus (strain ATCC 15305 / DSM 20229 / NCIMB 8711 / NCTC 7292 / S-41) protein is Lysine--tRNA ligase.